The primary structure comprises 440 residues: Alpha-methylserine aldolase (440 aa).

An N6-(pyridoxal phosphate)lysine modification is found at Lys-255.

This sequence belongs to the SHMT family. Alpha-methylserine aldolase subfamily. Homodimer. It depends on pyridoxal 5'-phosphate as a cofactor.

It carries out the reaction 2-methyl-L-serine = formaldehyde + L-alanine. Its function is as follows. Catalyzes the reversible interconversion of alpha-methyl-L-serine to L-alanine and formaldehyde. The chain is Alpha-methylserine aldolase from Variovorax paradoxus.